Consider the following 201-residue polypeptide: 7-methyl-GTP pyrophosphatase (201 aa).

Asp-73 functions as the Proton acceptor in the catalytic mechanism.

It belongs to the Maf family. YceF subfamily. Requires a divalent metal cation as cofactor.

It localises to the cytoplasm. The catalysed reaction is N(7)-methyl-GTP + H2O = N(7)-methyl-GMP + diphosphate + H(+). Its function is as follows. Nucleoside triphosphate pyrophosphatase that hydrolyzes 7-methyl-GTP (m(7)GTP). May have a dual role in cell division arrest and in preventing the incorporation of modified nucleotides into cellular nucleic acids. The protein is 7-methyl-GTP pyrophosphatase of Thiobacillus denitrificans (strain ATCC 25259 / T1).